The chain runs to 145 residues: UPF0735 ACT domain-containing protein CLD_1535 (145 aa).

In terms of domain architecture, ACT spans 69–144 (TIGLLLGHER…NVIKVDLIAM (76 aa)).

It belongs to the UPF0735 family.

The sequence is that of UPF0735 ACT domain-containing protein CLD_1535 from Clostridium botulinum (strain Okra / Type B1).